Here is a 226-residue protein sequence, read N- to C-terminus: 3-dehydroquinate dehydratase (226 aa).

Residues Ser21, 42-44 (EVR), and Arg70 contribute to the 3-dehydroquinate site. The Proton donor/acceptor role is filled by His124. Lys149 functions as the Schiff-base intermediate with substrate in the catalytic mechanism. Residues Arg187, Thr206, and Gln210 each contribute to the 3-dehydroquinate site.

Belongs to the type-I 3-dehydroquinase family. Homodimer.

It catalyses the reaction 3-dehydroquinate = 3-dehydroshikimate + H2O. Its pathway is metabolic intermediate biosynthesis; chorismate biosynthesis; chorismate from D-erythrose 4-phosphate and phosphoenolpyruvate: step 3/7. Its function is as follows. Involved in the third step of the chorismate pathway, which leads to the biosynthesis of aromatic amino acids. Catalyzes the cis-dehydration of 3-dehydroquinate (DHQ) and introduces the first double bond of the aromatic ring to yield 3-dehydroshikimate. In Methanothrix thermoacetophila (strain DSM 6194 / JCM 14653 / NBRC 101360 / PT) (Methanosaeta thermophila), this protein is 3-dehydroquinate dehydratase.